Here is a 215-residue protein sequence, read N- to C-terminus: Probable transaldolase 1 (215 aa).

The active-site Schiff-base intermediate with substrate is the K83.

It belongs to the transaldolase family. Type 3B subfamily.

It localises to the cytoplasm. It carries out the reaction D-sedoheptulose 7-phosphate + D-glyceraldehyde 3-phosphate = D-erythrose 4-phosphate + beta-D-fructose 6-phosphate. Its pathway is carbohydrate degradation; pentose phosphate pathway; D-glyceraldehyde 3-phosphate and beta-D-fructose 6-phosphate from D-ribose 5-phosphate and D-xylulose 5-phosphate (non-oxidative stage): step 2/3. Transaldolase is important for the balance of metabolites in the pentose-phosphate pathway. In Bacillus anthracis, this protein is Probable transaldolase 1.